The sequence spans 72 residues: METEALLNEKISVQQARQEFANYANNIPEPMMVSVAPPKANPSVSSKTKQQQHFKPGKATKDKATTKCCTIS.

The segment at 32–72 is disordered; sequence MVSVAPPKANPSVSSKTKQQQHFKPGKATKDKATTKCCTIS. Cysteine 68 is lipidated: S-palmitoyl cysteine. Cysteine 69 carries the cysteine methyl ester modification. Residue cysteine 69 is the site of S-farnesyl cysteine attachment. Residues 70-72 constitute a propeptide, removed in mature form; sequence TIS.

The protein belongs to the G protein gamma family. In terms of assembly, g proteins are composed of 3 units, alpha, beta and gamma. Binding of the beta-gamma subunit complex (git5-git11) to the alpha subunit (gpa2) facilitates interaction with GPCR git3.

Its subcellular location is the cell membrane. Its function is as follows. Gamma subunit of the heterotrimeric guanine nucleotide-binding protein (G protein) involved in glucose-induced cAMP signaling. The beta-gamma subunits (git5-git11) promote binding of the alpha subunit gpa2 to GPCR git3, which senses extracellular glucose, to activate cAMP-PKA signaling and repress sexual development and gluconeogenesis. This chain is Guanine nucleotide-binding protein subunit gamma (git11), found in Schizosaccharomyces pombe (strain 972 / ATCC 24843) (Fission yeast).